The following is a 167-amino-acid chain: Large ribosomal subunit protein uL10 (167 aa).

The protein belongs to the universal ribosomal protein uL10 family. Part of the ribosomal stalk of the 50S ribosomal subunit. The N-terminus interacts with L11 and the large rRNA to form the base of the stalk. The C-terminus forms an elongated spine to which L12 dimers bind in a sequential fashion forming a multimeric L10(L12)X complex.

Forms part of the ribosomal stalk, playing a central role in the interaction of the ribosome with GTP-bound translation factors. The protein is Large ribosomal subunit protein uL10 of Tolumonas auensis (strain DSM 9187 / NBRC 110442 / TA 4).